Here is a 985-residue protein sequence, read N- to C-terminus: Na(+)/H(+) antiporter (985 aa).

Over 1 to 12 the chain is Cytoplasmic; it reads MAIWEQLEVSKA. The helical transmembrane segment at 13-33 threads the bilayer; sequence HVAYACVGVFSSIFSLVSLYV. Topologically, residues 34–36 are extracellular; the sequence is KEK. The chain crosses the membrane as a helical span at residues 37 to 57; it reads LYIGESTVAGIFGLIVGPVCL. Residues 58 to 70 lie on the Cytoplasmic side of the membrane; it reads NWFNPLKWGNSDS. A helical membrane pass occupies residues 71-91; that stretch reads ITLEITRIVLCLQIFAVAVEL. At 92–105 the chain is on the extracellular side; that stretch reads PRKYMLKHWVSVTM. The chain crosses the membrane as a helical span at residues 106–126; that stretch reads LLLPVMTAGWLIIGLFVWILI. At 127–128 the chain is on the cytoplasmic side; the sequence is PG. The helical transmembrane segment at 129 to 149 threads the bilayer; it reads LNFSASLLISACITATDPILA. Residues 150-176 are Extracellular-facing; the sequence is QSVVSGKFAQRVPGHLRNLLSAESGCN. The chain crosses the membrane as a helical span at residues 177–197; the sequence is DGMAFPFLFLSMNLILHPGNG. At 198-203 the chain is on the cytoplasmic side; it reads REIVKD. The chain crosses the membrane as a helical span at residues 204-224; that stretch reads WICVTILYECLFGCLLGCFIG. The Extracellular portion of the chain corresponds to 225 to 244; sequence YVGRITIRFAEKKNIIDRES. A helical transmembrane segment spans residues 245-265; that stretch reads FLAFYVVLAFMCAGFGSILGV. Topologically, residues 266–294 are cytoplasmic; sequence DDLLVSFAAGATFAWDGWFSQKTQESNVS. A helical transmembrane segment spans residues 295 to 315; sequence TVIDLLLNYAYFIYFGAIIPW. Over 316 to 319 the chain is Extracellular; the sequence is SQFN. Residues 320–340 form a helical membrane-spanning segment; it reads NGEIGTNVWRLIILSIVVIFL. Residues 341 to 361 lie on the Cytoplasmic side of the membrane; that stretch reads RRIPAVMILRPLIPDIKSWRE. The chain crosses the membrane as a helical span at residues 362–382; the sequence is ALFVGHFGPIGVGAIFAAILA. At 383 to 410 the chain is on the extracellular side; that stretch reads RGELESTFSDEPTPLNVVPSKEESKHWQ. The chain crosses the membrane as a helical span at residues 411–431; that stretch reads LIACIWPITCFFIVTSIIVHG. The Cytoplasmic portion of the chain corresponds to 432–985; that stretch reads SSVAIITLGR…ALSKTLGLNK (554 aa). 2 disordered regions span residues 489-701 and 726-760; these read MTLS…KPGT and DRNEARDDEVSVDSTAHSSLTTTMTNLSSSSGGRL. Residues 517-526 show a composition bias toward polar residues; the sequence is NNDQIGSVAT. The segment covering 538 to 558 has biased composition (basic residues); that stretch reads PRRRKLSRKEKRLNRRQKLRN. Basic and acidic residues-rich tracts occupy residues 559–572 and 580–593; these read KGREIFSSRSKNEM and DLGRERLQKEKEAR. The residue at position 568 (Ser568) is a Phosphoserine. The span at 637-646 shows a compositional bias: low complexity; that stretch reads SFESSERSSS. Residues 661-675 show a composition bias toward acidic residues; that stretch reads EETESEIESEDEMEN. Residues 676-698 are compositionally biased toward basic and acidic residues; it reads ESERSMASSEERRIRKMKEEEMK. The span at 743-756 shows a compositional bias: low complexity; sequence SSLTTTMTNLSSSS. The residue at position 765 (Thr765) is a Phosphothreonine. 2 positions are modified to phosphoserine: Ser768 and Ser774. The tract at residues 812–985 is disordered; that stretch reads INPHKSDDDK…ALSKTLGLNK (174 aa). Basic and acidic residues-rich tracts occupy residues 815 to 828 and 854 to 863; these read HKSDDDKSKNRPRN and DEEKAIEGPS. A compositionally biased stretch (acidic residues) spans 887–920; sequence LDLEDEPSSEEDLGDSYNMDDSEDYDDNAYESET. The span at 970–979 shows a compositional bias: low complexity; sequence SAAVKSALSK.

This sequence belongs to the fungal Na(+)/H(+) exchanger family.

The protein localises to the cell membrane. Functionally, sodium export from cell, takes up external protons in exchange for internal sodium ions. Also capable of exporting potassium ions. This chain is Na(+)/H(+) antiporter (NHA1), found in Saccharomyces cerevisiae (strain ATCC 204508 / S288c) (Baker's yeast).